Consider the following 498-residue polypeptide: 4-aminobutyrate aminotransferase (498 aa).

Pyridoxal 5'-phosphate is bound at residue 164–165; the sequence is GS. Substrate is bound at residue R222. An N6-(pyridoxal phosphate)lysine modification is found at K356. Residue T381 participates in pyridoxal 5'-phosphate binding.

Belongs to the class-III pyridoxal-phosphate-dependent aminotransferase family. As to quaternary structure, homodimer. It depends on pyridoxal 5'-phosphate as a cofactor.

Its subcellular location is the cytoplasm. It carries out the reaction 4-aminobutanoate + 2-oxoglutarate = succinate semialdehyde + L-glutamate. Its function is as follows. Deaminates gamma-aminobutyric acid (GABA) to succinate-semialdehyde, which in turn is converted to succinate by the succinate semialdehyde dehydrogenase. Required for the degradation of GABA, which is important for utilization of GABA as nitrogen source. This Emericella nidulans (strain FGSC A4 / ATCC 38163 / CBS 112.46 / NRRL 194 / M139) (Aspergillus nidulans) protein is 4-aminobutyrate aminotransferase (gatA).